A 254-amino-acid polypeptide reads, in one-letter code: PF03932 family protein CutC (254 aa).

Belongs to the CutC family.

The protein resides in the cytoplasm. This is PF03932 family protein CutC from Yersinia pseudotuberculosis serotype O:1b (strain IP 31758).